Consider the following 173-residue polypeptide: Lipoprotein signal peptidase (173 aa).

The next 2 membrane-spanning stretches (helical) occupy residues 67 to 87 and 92 to 112; these read WISL…PHLG and MGFG…FAFG. Residues Asp-116 and Asp-132 contribute to the active site. A helical membrane pass occupies residues 125–145; it reads FPVFNGADIAINLGLACLLIG. A disordered region spans residues 151-173; sequence SRTPAPARPASKQIREPTDTTGG. The span at 163–173 shows a compositional bias: basic and acidic residues; that stretch reads QIREPTDTTGG.

The protein belongs to the peptidase A8 family.

It is found in the cell inner membrane. The catalysed reaction is Release of signal peptides from bacterial membrane prolipoproteins. Hydrolyzes -Xaa-Yaa-Zaa-|-(S,diacylglyceryl)Cys-, in which Xaa is hydrophobic (preferably Leu), and Yaa (Ala or Ser) and Zaa (Gly or Ala) have small, neutral side chains.. It participates in protein modification; lipoprotein biosynthesis (signal peptide cleavage). Functionally, this protein specifically catalyzes the removal of signal peptides from prolipoproteins. This Gloeobacter violaceus (strain ATCC 29082 / PCC 7421) protein is Lipoprotein signal peptidase.